The chain runs to 382 residues: Toluene efflux pump periplasmic linker protein TtgD (382 aa).

An N-terminal signal peptide occupies residues 1–23; that stretch reads MRLERALRARQLIPLAAIWLLVG. Cys24 is lipidated: N-palmitoyl cysteine. A lipid anchor (S-diacylglycerol cysteine) is attached at Cys24. Residues 100–136 adopt a coiled-coil conformation; it reads YEALLARAEASLLTAQNLARRYERLLDTNAISQQQYD.

Belongs to the membrane fusion protein (MFP) (TC 8.A.1) family.

Its subcellular location is the cell inner membrane. Functionally, the periplasmic linker protein component of an inducible organic solvent efflux pump. Involved in export of toluene and styrene but not of m-xylene, propylbenzene or ethylbenzene. Is not involved in antibiotic or AMP efflux. This is Toluene efflux pump periplasmic linker protein TtgD (ttgD) from Pseudomonas putida (strain DOT-T1E).